A 491-amino-acid polypeptide reads, in one-letter code: Peptidoglycan D,D-transpeptidase PbpA (491 aa).

Over 1-7 (MNASLRR) the chain is Cytoplasmic. Residues 8–28 (ISVTVMALIVLLLLNATMTQV) form a helical; Signal-anchor for type II membrane protein membrane-spanning segment. The Periplasmic portion of the chain corresponds to 29-491 (FTADGLRADP…VIEAALQGEP (463 aa)). The interval 160–484 (GAVVALEPST…AAPIGRAVIE (325 aa)) is transpeptidase. The active-site Acyl-ester intermediate is S222.

This sequence belongs to the transpeptidase family.

Its subcellular location is the cell inner membrane. The catalysed reaction is Preferential cleavage: (Ac)2-L-Lys-D-Ala-|-D-Ala. Also transpeptidation of peptidyl-alanyl moieties that are N-acyl substituents of D-alanine.. It participates in cell wall biogenesis; peptidoglycan biosynthesis. Transpeptidase that catalyzes cross-linking of the peptidoglycan cell wall. Required for the regulation of cell length. This is Peptidoglycan D,D-transpeptidase PbpA (pbpA) from Mycobacterium tuberculosis (strain CDC 1551 / Oshkosh).